The sequence spans 506 residues: Phenylacetaldehyde synthase (506 aa).

3 residues coordinate L-phenylalanine: Pro-101, His-202, and His-317. Position 318 is an N6-(pyridoxal phosphate)lysine (Lys-318).

Belongs to the group II decarboxylase family. Homotetramer. Pyridoxal 5'-phosphate is required as a cofactor. In terms of tissue distribution, highly expressed in corolla limbs and at lower levels in corolla tubes and ovaries.

The enzyme catalyses L-phenylalanine + O2 + H2O + H(+) = 2-phenylacetaldehyde + H2O2 + NH4(+) + CO2. Functionally, bifunctional enzyme that catalyzes the decarboxylation of L-phenylalanine to 2-phenylethylamine, which is then oxidized to form 2-phenylacetaldehyde, a constituent of floral scent. 2-phenylacetaldehyde is a precursor of 2-phenylethanol, another constituent of floral scent. The protein is Phenylacetaldehyde synthase of Petunia hybrida (Petunia).